A 346-amino-acid polypeptide reads, in one-letter code: MQSITITPDLSSNFKDFVTIDAHTEGEPLRVIISGYPEIKGSTILEKRQYVQQNLDTYRKLLMHEPRGHADMYGALITEAVTEEADFGVLFLHNEGYSSMCGHGILALVKVMCQTDSIDLGLEPRTIKIDSPAGLITAKAYRDSQGKIQASFKNVDSWADALNCSVNVEGFGEVNYDIGFGGAYYAYVDADEHGISCGQDNVAQLIDVGRRIKHAVMASHTLVHPLEEDLSFLYGTIFTSKKVTNPEAHSRHVCIFADGEVDRSPTGTGVSARVALLYAKGEVALNTPIMIESIVDGRMIVSASAESEFHGKQGVIPEVSGRSFITGKHQFFIDPDDVFQNGFMLR.

Cysteine 101 (proton acceptor) is an active-site residue. Substrate-binding positions include 102 to 103, aspartate 262, and 267 to 268; these read GH and GT.

This sequence belongs to the proline racemase family.

It catalyses the reaction trans-3-hydroxy-L-proline = 1-pyrroline-2-carboxylate + H2O. In terms of biological role, in vitro, catalyzes the dehydration of trans-3-hydroxy-L-proline (t3LHyp) to Delta(1)-pyrroline-2-carboxylate (Pyr2C), albeit with very low efficiency. The physiological substrate may be different. Displays neither trans-4-hydroxy-L-proline (t4LHyp) epimerase nor proline racemase activity. This chain is Protein Spea_1705, found in Shewanella pealeana (strain ATCC 700345 / ANG-SQ1).